Consider the following 281-residue polypeptide: 2-dehydro-3-deoxyphosphooctonate aldolase (281 aa).

This sequence belongs to the KdsA family.

The protein resides in the cytoplasm. It catalyses the reaction D-arabinose 5-phosphate + phosphoenolpyruvate + H2O = 3-deoxy-alpha-D-manno-2-octulosonate-8-phosphate + phosphate. Its pathway is carbohydrate biosynthesis; 3-deoxy-D-manno-octulosonate biosynthesis; 3-deoxy-D-manno-octulosonate from D-ribulose 5-phosphate: step 2/3. It participates in bacterial outer membrane biogenesis; lipopolysaccharide biosynthesis. The sequence is that of 2-dehydro-3-deoxyphosphooctonate aldolase from Pseudomonas putida (strain GB-1).